The chain runs to 490 residues: Betaine aldehyde dehydrogenase (490 aa).

Residues Thr-26, Ile-27, and Asp-93 each contribute to the K(+) site. 150–152 (GAW) lines the NAD(+) pocket. The active-site Charge relay system is the Lys-162. 176 to 179 (KPSE) provides a ligand contact to NAD(+). Val-180 contacts K(+). 230-233 (GTST) provides a ligand contact to NAD(+). Leu-246 is a binding site for K(+). The active-site Proton acceptor is Glu-252. NAD(+)-binding residues include Gly-254, Cys-286, and Glu-387. Cys-286 serves as the catalytic Nucleophile. Position 286 is a cysteine sulfenic acid (-SOH) (Cys-286). K(+) is bound by residues Lys-457 and Gly-460. The active-site Charge relay system is Glu-464.

This sequence belongs to the aldehyde dehydrogenase family. Dimer of dimers. K(+) is required as a cofactor.

The enzyme catalyses betaine aldehyde + NAD(+) + H2O = glycine betaine + NADH + 2 H(+). The protein operates within amine and polyamine biosynthesis; betaine biosynthesis via choline pathway; betaine from betaine aldehyde: step 1/1. Involved in the biosynthesis of the osmoprotectant glycine betaine. Catalyzes the irreversible oxidation of betaine aldehyde to the corresponding acid. The sequence is that of Betaine aldehyde dehydrogenase from Pseudomonas aeruginosa (strain UCBPP-PA14).